The sequence spans 276 residues: Shikimate dehydrogenase (NADP(+)) (276 aa).

Shikimate contacts are provided by residues 15–17 and T62; that span reads SKS. K66 functions as the Proton acceptor in the catalytic mechanism. Residues N87 and D103 each contribute to the shikimate site. NADP(+) is bound by residues 127 to 131, 151 to 156, and M215; these read GAGGA and NRTLSK. A shikimate-binding site is contributed by Y217. G239 is an NADP(+) binding site.

This sequence belongs to the shikimate dehydrogenase family. As to quaternary structure, homodimer.

It carries out the reaction shikimate + NADP(+) = 3-dehydroshikimate + NADPH + H(+). The protein operates within metabolic intermediate biosynthesis; chorismate biosynthesis; chorismate from D-erythrose 4-phosphate and phosphoenolpyruvate: step 4/7. Involved in the biosynthesis of the chorismate, which leads to the biosynthesis of aromatic amino acids. Catalyzes the reversible NADPH linked reduction of 3-dehydroshikimate (DHSA) to yield shikimate (SA). In Cellvibrio japonicus (strain Ueda107) (Pseudomonas fluorescens subsp. cellulosa), this protein is Shikimate dehydrogenase (NADP(+)).